A 375-amino-acid polypeptide reads, in one-letter code: Peptidyl-prolyl cis-trans isomerase D (375 aa).

In terms of domain architecture, PPIase cyclophilin-type spans 7 to 169 (YFDITIANEP…QAVTISSAGV (163 aa)). 3 TPR repeats span residues 217-250 (AGKLKEVGTKEFKAGNFAVALDKYQKALRYLDVH), 270-307 (LPLLTNAALCALKLPASPNTSSLVVSLTSRALTLPNLS), and 312-345 (GKALYRRAQAYVLKKDDEAAEKDLKGALECVPGD).

It belongs to the cyclophilin-type PPIase family. PPIase D subfamily.

Its subcellular location is the cytoplasm. The catalysed reaction is [protein]-peptidylproline (omega=180) = [protein]-peptidylproline (omega=0). In terms of biological role, PPIases accelerate the folding of proteins. It catalyzes the cis-trans isomerization of proline imidic peptide bonds in oligopeptides. In Cryptococcus neoformans var. neoformans serotype D (strain JEC21 / ATCC MYA-565) (Filobasidiella neoformans), this protein is Peptidyl-prolyl cis-trans isomerase D (CPR6).